A 134-amino-acid polypeptide reads, in one-letter code: Protein NrdI (134 aa).

This sequence belongs to the NrdI family.

Its function is as follows. Probably involved in ribonucleotide reductase function. The protein is Protein NrdI of Yersinia enterocolitica serotype O:8 / biotype 1B (strain NCTC 13174 / 8081).